The sequence spans 120 residues: Natriuretic peptide (120 aa).

Residues 1 to 25 form the signal peptide; it reads MVGLSRLADGGLLLVLALLPLALDG. The propeptide occupies 26-70; it reads KPAPLEKAPMAPARIIPYLRPVGKESRAALDRMVPPEDGDSRRLE. Residues Cys-81 and Cys-97 are joined by a disulfide bond. Positions 110-120 are excised as a propeptide; it reads ILPYLRPIRKE.

This sequence belongs to the natriuretic peptide family. Expressed by the venom gland.

It localises to the secreted. Its function is as follows. Natriuretic peptide that dose-dependently induces the rapid relaxation of rat aortic strips phenylephrine-precontracted. Acts by stimulating cGMP production in a dose-dependent manner (by probably activating NPR1 and/or NPR2). May also show potent hypotensive effects. This is Natriuretic peptide from Micrurus altirostris (Uruguayan coral snake).